We begin with the raw amino-acid sequence, 461 residues long: Nuclear distribution protein PAC1 (461 aa).

Residues 9–41 (QAEELHKSIIAYLTANNLLNTANTLRAELNLSE) form the LisH domain. 7 WD repeats span residues 114–155 (SHRD…RTIK), 157–197 (HTRA…KNIR), 201–248 (GHDH…CVRT), 251–290 (GHTA…PESK), 312–355 (QYLS…LMTL), 357–396 (GHDN…KCIK), and 401–457 (AHER…MKLR).

Belongs to the WD repeat LIS1/nudF family. Self-associates. Interacts with NDL1 and dynein.

It is found in the cytoplasm. Its subcellular location is the cytoskeleton. The protein resides in the spindle pole. In terms of biological role, positively regulates the activity of the minus-end directed microtubule motor protein dynein. May enhance dynein-mediated microtubule sliding by targeting dynein to the microtubule plus end. Required for nuclear migration during vegetative growth as well as development. Required for retrograde early endosome (EE) transport from the hyphal tip. Required for localization of dynein to the mitotic spindle poles. Recruits additional proteins to the dynein complex at SPBs. The sequence is that of Nuclear distribution protein PAC1 from Arthroderma otae (strain ATCC MYA-4605 / CBS 113480) (Microsporum canis).